Consider the following 64-residue polypeptide: Hypoxia-inducible lipid droplet-associated protein (64 aa).

A required for targeting to lipid droplets region spans residues 1 to 37; it reads MKFMLNLYVLGIMLTLLSIFVRVMESLGGLLESPLPG. A helical membrane pass occupies residues 7-24; it reads LYVLGIMLTLLSIFVRVM. Positions 42–51 are enriched in polar residues; the sequence is TRGQLANTQP. Positions 42–64 are disordered; it reads TRGQLANTQPPKGLPDHPSRGVQ. A compositionally biased stretch (basic and acidic residues) spans 55–64; it reads LPDHPSRGVQ.

It localises to the lipid droplet. The protein resides in the secreted. The protein localises to the membrane. In terms of biological role, increases intracellular lipid accumulation. Stimulates expression of cytokines including IL6, MIF and VEGFA. Enhances cell growth and proliferation. This chain is Hypoxia-inducible lipid droplet-associated protein (Hilpda), found in Mus musculus (Mouse).